A 330-amino-acid chain; its full sequence is G-protein coupled receptor 157 (330 aa).

Residues M1–R15 lie on the Extracellular side of the membrane. The helical transmembrane segment at A16–H36 threads the bilayer. The Cytoplasmic segment spans residues A37–R48. The chain crosses the membrane as a helical span at residues L49 to L69. Over Q70–T87 the chain is Extracellular. The helical transmembrane segment at F88 to I108 threads the bilayer. Residues V109 to H119 lie on the Cytoplasmic side of the membrane. Residues L120–V140 traverse the membrane as a helical segment. The Extracellular segment spans residues C141–R166. A helical transmembrane segment spans residues V167–L187. At L188–K227 the chain is on the cytoplasmic side. Residues L228–L250 traverse the membrane as a helical segment. At C251–P259 the chain is on the extracellular side. Residues V260–L282 traverse the membrane as a helical segment. Topologically, residues C283–T330 are cytoplasmic. Residues T303 to T330 are disordered. Basic and acidic residues predominate over residues E317–T330.

This sequence belongs to the G-protein coupled receptor 2 family.

It localises to the cell projection. The protein resides in the cilium membrane. In terms of biological role, orphan receptor that promotes neuronal differentiation of radial glial progenitors (RGPs). The activity of this receptor is mediated by a G(q)-protein that activates a phosphatidylinositol-calcium second messenger. The chain is G-protein coupled receptor 157 (Gpr157) from Rattus norvegicus (Rat).